Consider the following 634-residue polypeptide: Transcription termination factor FttA (634 aa).

Residues 4–69 (EEVLENIRKE…ISIRPDPSVL (66 aa)) form a KHa region. The tract at residues 70-137 (VEPEIAKQKI…WAPKPVRTPP (68 aa)) is KHb. Residues 179 to 381 (WIRVSFLGGA…LIIESTYGAY (203 aa)) form a metallo-beta-lactamase N-terminus region. The Zn(2+) site is built by histidine 240, histidine 242, aspartate 244, histidine 245, histidine 327, and aspartate 350. The interval 382–575 (DDVLPEREEA…LQVYTIEGFS (194 aa)) is beta-Casp. The tract at residues 576 to 634 (GHSDRKQLIKYIRRLKPSPEKIIMVHGEESKCLDFADTVRRLFKKQTYVPMNLDAIRVK) is metallo-beta-lactamase C-terminus. Histidine 601 contributes to the Zn(2+) binding site.

Belongs to the metallo-beta-lactamase superfamily. RNA-metabolizing metallo-beta-lactamase-like family. FttA subfamily. As to quaternary structure, homodimer. Interacts with RNA polymerase (RNAP), interacts with the Spt4-Spt5 complex. The cofactor is Zn(2+).

Its activity is regulated as follows. Optimal NaCl concentration is 100 mM for nuclease activity on RNA. Its function is as follows. Terminates transcription on the whole genome. Termination is linked to FttA-mediated RNA cleavage and does not require NTP hydrolysis. Cleaves endonucleolytically at the RNA exit channel of RNA polymerase (RNAP); the 5'-3' exonuclease activity of this protein degrades the nascent RNA released from RNAP. An endoribonuclease with no apparent exonuclease activity, has low activity on single-stranded DNA (endodeoxyribonuclease, endoDNase). The protein is Transcription termination factor FttA of Methanocaldococcus jannaschii (strain ATCC 43067 / DSM 2661 / JAL-1 / JCM 10045 / NBRC 100440) (Methanococcus jannaschii).